The following is a 625-amino-acid chain: Chromatin structure-remodeling complex subunit RSC4 (625 aa).

The disordered stretch occupies residues 1 to 35 (MVVKKRKLATEAGGSDERPKYLPGKHPKNQEKTPH). 2 Bromo domains span residues 53 to 158 (WHIP…VLKA) and 181 to 292 (KLVD…IQKE). Phosphoserine is present on residues S199 and S545. Positions 536–552 (RTSNVNSNLSQPQQQEN) are enriched in polar residues. Residues 536 to 555 (RTSNVNSNLSQPQQQENDVI) form a disordered region.

Component of the two forms of the RSC complex composed of at least either RSC1 or RSC2, and ARP7, ARP9, LDB7, NPL6, RSC3, RSC30, RSC4, RSC58, RSC6, RSC8, RSC9, SFH1, STH1, HTL1 and probably RTT102. The complexes interact with histone and histone variant components of centromeric chromatin.

It is found in the nucleus. Component of the chromatin structure remodeling complex (RSC), which is involved in transcription regulation and nucleosome positioning. RSC is responsible for the transfer of a histone octamer from a nucleosome core particle to naked DNA. The reaction requires ATP and involves an activated RSC-nucleosome intermediate. Remodeling reaction also involves DNA translocation, DNA twist and conformational change. As a reconfigurer of centromeric and flanking nucleosomes, RSC complex is required both for proper kinetochore function in chromosome segregation and, via a PKC1-dependent signaling pathway, for organization of the cellular cytoskeleton. This Saccharomyces cerevisiae (strain ATCC 204508 / S288c) (Baker's yeast) protein is Chromatin structure-remodeling complex subunit RSC4 (RSC4).